Here is a 332-residue protein sequence, read N- to C-terminus: Endonuclease 8-like 2 (332 aa).

The Schiff-base intermediate with DNA role is filled by P2. The active-site Proton donor is the E3. K50 functions as the Proton donor; for beta-elimination activity in the catalytic mechanism. At K50 the chain carries N6-acetyllysine. Residues 56-121 are disordered; that stretch reads FDPDEEMGPP…EDDSEYLERD (66 aa). The residue at position 68 (S68) is a Phosphoserine. Residues 74 to 84 are compositionally biased toward basic and acidic residues; that stretch reads PQKEAQKEGAA. A compositionally biased stretch (polar residues) spans 94–105; that stretch reads GQKTPDGSSQSA. An N6-acetyllysine modification is found at K154. DNA is bound at residue N231. The FPG-type zinc-finger motif lies at 284-320; sequence QVYQREQCPAGHQVMKEAFGPQDGLQRLTWWCPQCQP. Residue R310 is the Proton donor; for delta-elimination activity of the active site.

This sequence belongs to the FPG family. As to quaternary structure, binds EP300.

Its subcellular location is the nucleus. It carries out the reaction 2'-deoxyribonucleotide-(2'-deoxyribose 5'-phosphate)-2'-deoxyribonucleotide-DNA = a 3'-end 2'-deoxyribonucleotide-(2,3-dehydro-2,3-deoxyribose 5'-phosphate)-DNA + a 5'-end 5'-phospho-2'-deoxyribonucleoside-DNA + H(+). With respect to regulation, acetylation of Lys-50 leads to loss of DNA nicking activity. In terms of biological role, involved in base excision repair of DNA damaged by oxidation or by mutagenic agents. Has DNA glycosylase activity towards 5-hydroxyuracil and other oxidized derivatives of cytosine with a preference for mismatched double-stranded DNA (DNA bubbles). Has low or no DNA glycosylase activity towards thymine glycol, 2-hydroxyadenine, hypoxanthine and 8-oxoguanine. Has AP (apurinic/apyrimidinic) lyase activity and introduces nicks in the DNA strand. Cleaves the DNA backbone by beta-delta elimination to generate a single-strand break at the site of the removed base with both 3'- and 5'-phosphates. This is Endonuclease 8-like 2 (NEIL2) from Pongo abelii (Sumatran orangutan).